A 185-amino-acid polypeptide reads, in one-letter code: MKNDTLKGQYRINEQIRAKEVRIVGDEIEPKVYPIFQALKMAEEKELDLVEISPNAQPPVCRIIDYSKFLYQLKKRQKEQKAKQVKVNVKEIRFGPQTDDHDYNFKLKHARGFLEDGDKVKAYVFFKGRSILFKEQGEVLLLRFANDLEDFAKVDQMPVLEGKRMTIQLSPKKRKCLKNRRLPNR.

The protein belongs to the IF-3 family. Monomer.

Its subcellular location is the cytoplasm. In terms of biological role, IF-3 binds to the 30S ribosomal subunit and shifts the equilibrium between 70S ribosomes and their 50S and 30S subunits in favor of the free subunits, thus enhancing the availability of 30S subunits on which protein synthesis initiation begins. The sequence is that of Translation initiation factor IF-3 from Bacteroides thetaiotaomicron (strain ATCC 29148 / DSM 2079 / JCM 5827 / CCUG 10774 / NCTC 10582 / VPI-5482 / E50).